The sequence spans 322 residues: tRNA-dihydrouridine synthase B (322 aa).

Residues Pro-16 to Ala-18 and Gln-70 contribute to the FMN site. The Proton donor role is filled by Cys-100. Residues Lys-139, Asn-200–Asp-202, and Gly-224–Arg-225 each bind FMN.

The protein belongs to the Dus family. DusB subfamily. FMN is required as a cofactor.

It carries out the reaction a 5,6-dihydrouridine in tRNA + NAD(+) = a uridine in tRNA + NADH + H(+). It catalyses the reaction a 5,6-dihydrouridine in tRNA + NADP(+) = a uridine in tRNA + NADPH + H(+). Functionally, catalyzes the synthesis of 5,6-dihydrouridine (D), a modified base found in the D-loop of most tRNAs, via the reduction of the C5-C6 double bond in target uridines. In Vibrio cholerae serotype O1 (strain ATCC 39315 / El Tor Inaba N16961), this protein is tRNA-dihydrouridine synthase B.